Reading from the N-terminus, the 548-residue chain is Chaperonin GroEL (548 aa).

Residues 30 to 33 (TLGP), K51, 87 to 91 (DGTTT), G415, 479 to 481 (NAA), and D495 each bind ATP.

Belongs to the chaperonin (HSP60) family. In terms of assembly, forms a cylinder of 14 subunits composed of two heptameric rings stacked back-to-back. Interacts with the co-chaperonin GroES.

The protein resides in the cytoplasm. It carries out the reaction ATP + H2O + a folded polypeptide = ADP + phosphate + an unfolded polypeptide.. In terms of biological role, together with its co-chaperonin GroES, plays an essential role in assisting protein folding. The GroEL-GroES system forms a nano-cage that allows encapsulation of the non-native substrate proteins and provides a physical environment optimized to promote and accelerate protein folding. The sequence is that of Chaperonin GroEL from Salmonella gallinarum (strain 287/91 / NCTC 13346).